Here is a 188-residue protein sequence, read N- to C-terminus: Crossover junction endodeoxyribonuclease RuvC (188 aa).

Catalysis depends on residues D14, E74, and D149. 3 residues coordinate Mg(2+): D14, E74, and D149.

It belongs to the RuvC family. As to quaternary structure, homodimer which binds Holliday junction (HJ) DNA. The HJ becomes 2-fold symmetrical on binding to RuvC with unstacked arms; it has a different conformation from HJ DNA in complex with RuvA. In the full resolvosome a probable DNA-RuvA(4)-RuvB(12)-RuvC(2) complex forms which resolves the HJ. Mg(2+) is required as a cofactor.

The protein resides in the cytoplasm. The enzyme catalyses Endonucleolytic cleavage at a junction such as a reciprocal single-stranded crossover between two homologous DNA duplexes (Holliday junction).. Functionally, the RuvA-RuvB-RuvC complex processes Holliday junction (HJ) DNA during genetic recombination and DNA repair. Endonuclease that resolves HJ intermediates. Cleaves cruciform DNA by making single-stranded nicks across the HJ at symmetrical positions within the homologous arms, yielding a 5'-phosphate and a 3'-hydroxyl group; requires a central core of homology in the junction. The consensus cleavage sequence is 5'-(A/T)TT(C/G)-3'. Cleavage occurs on the 3'-side of the TT dinucleotide at the point of strand exchange. HJ branch migration catalyzed by RuvA-RuvB allows RuvC to scan DNA until it finds its consensus sequence, where it cleaves and resolves the cruciform DNA. This chain is Crossover junction endodeoxyribonuclease RuvC, found in Bacteroides fragilis (strain ATCC 25285 / DSM 2151 / CCUG 4856 / JCM 11019 / LMG 10263 / NCTC 9343 / Onslow / VPI 2553 / EN-2).